A 342-amino-acid polypeptide reads, in one-letter code: 4-hydroxy-2-oxovalerate aldolase (342 aa).

A Pyruvate carboxyltransferase domain is found at 7–257 (VWITEVALRD…KTGIDLYKMM (251 aa)). Position 15-16 (15-16 (RD)) interacts with substrate. Aspartate 16 lines the Mn(2+) pocket. Histidine 19 serves as the catalytic Proton acceptor. The substrate site is built by serine 169 and histidine 196. The Mn(2+) site is built by histidine 196 and histidine 198. Position 287 (tyrosine 287) interacts with substrate.

Belongs to the 4-hydroxy-2-oxovalerate aldolase family.

It carries out the reaction (S)-4-hydroxy-2-oxopentanoate = acetaldehyde + pyruvate. The protein is 4-hydroxy-2-oxovalerate aldolase (pheE) of Geobacillus stearothermophilus (Bacillus stearothermophilus).